The following is a 280-amino-acid chain: Shikimate dehydrogenase (NADP(+)) (280 aa).

Residues 18–20 and Thr65 contribute to the shikimate site; that span reads SRS. Residue Lys69 is the Proton acceptor of the active site. Shikimate is bound by residues Asn90 and Asp105. Residues 131–135, 154–159, and Ile219 each bind NADP(+); these read GAGGA and NRTRAR. A shikimate-binding site is contributed by Tyr221. Residue Gly242 participates in NADP(+) binding.

This sequence belongs to the shikimate dehydrogenase family. As to quaternary structure, homodimer.

The catalysed reaction is shikimate + NADP(+) = 3-dehydroshikimate + NADPH + H(+). Its pathway is metabolic intermediate biosynthesis; chorismate biosynthesis; chorismate from D-erythrose 4-phosphate and phosphoenolpyruvate: step 4/7. Its function is as follows. Involved in the biosynthesis of the chorismate, which leads to the biosynthesis of aromatic amino acids. Catalyzes the reversible NADPH linked reduction of 3-dehydroshikimate (DHSA) to yield shikimate (SA). This chain is Shikimate dehydrogenase (NADP(+)), found in Methylocella silvestris (strain DSM 15510 / CIP 108128 / LMG 27833 / NCIMB 13906 / BL2).